A 308-amino-acid chain; its full sequence is uncharacterized protein (308 aa).

Residues 15–81 enclose the S4 RNA-binding domain; it reads MRVDTGLARL…QNTPIDIEGM (67 aa). Residue aspartate 139 is part of the active site.

Belongs to the pseudouridine synthase RluA family.

It carries out the reaction a uridine in RNA = a pseudouridine in RNA. This is an uncharacterized protein from Mycobacterium tuberculosis (strain CDC 1551 / Oshkosh).